The primary structure comprises 69 residues: DNA-directed RNA polymerase subunit epsilon (69 aa).

It belongs to the RNA polymerase subunit epsilon family. As to quaternary structure, RNAP is composed of a core of 2 alpha, a beta and a beta' subunit. The core is associated with a delta subunit, and at least one of epsilon or omega. When a sigma factor is associated with the core the holoenzyme is formed, which can initiate transcription.

The catalysed reaction is RNA(n) + a ribonucleoside 5'-triphosphate = RNA(n+1) + diphosphate. In terms of biological role, a non-essential component of RNA polymerase (RNAP). This chain is DNA-directed RNA polymerase subunit epsilon, found in Lysinibacillus sphaericus (strain C3-41).